Reading from the N-terminus, the 292-residue chain is MVALSVEVGPWTGCAVLFLRSCPAVNLLSLYKDQQGKFSVFKVLKLTLTDSAGGLEGYEILKLHDADPLLGVEVKFVDVAACRRFLQSYGSGAVQQSLSQHTCRLLHIPQQELALETQLKAGTHTLDFCLDDLELCLQHIHQSQPERLRDDEIAELDQQLQSQALGHIPQPPTLTQEEPPVPSNCFLFQKRVFEDRMLAAGDLQRFSNGVGRDWRKVGRALGKNCRALKGPAIDNLAYEYEREGLYEQAYQLLSRFIQAEGRAARLGRLVRALEDSKLTSLAENILDIQPRD.

The short motif at 148-164 (LRDDEIAELDQQLQSQA) is the Nuclear export signal element. Residues 199–289 (AAGDLQRFSN…SLAENILDIQ (91 aa)) enclose the Death domain. Positions 215–228 (RKVGRALGKNCRAL) match the Nuclear localization signal motif.

As to quaternary structure, heterodimer with tnfrsf1a.

It localises to the nucleus. Its subcellular location is the cytoplasm. It is found in the cytoskeleton. In terms of biological role, adapter molecule for tnfrsf1a that specifically associates with the cytoplasmic domain of activated tnfrsf1a mediating its interaction with fadd. The sequence is that of Tumor necrosis factor receptor type 1-associated DEATH domain protein (tradd) from Oncorhynchus mykiss (Rainbow trout).